A 148-amino-acid chain; its full sequence is Lysozyme C (148 aa).

An N-terminal signal peptide occupies residues 1 to 18 (MKAVIILGLVLLSVTVQG). The C-type lysozyme domain maps to 19–148 (KIFERCELAR…VSQYVQGCGV (130 aa)). 4 disulfides stabilise this stretch: Cys-24/Cys-146, Cys-48/Cys-134, Cys-83/Cys-99, and Cys-95/Cys-113. Residues Glu-53 and Asp-71 contribute to the active site.

Belongs to the glycosyl hydrolase 22 family. Monomer.

The protein localises to the secreted. The catalysed reaction is Hydrolysis of (1-&gt;4)-beta-linkages between N-acetylmuramic acid and N-acetyl-D-glucosamine residues in a peptidoglycan and between N-acetyl-D-glucosamine residues in chitodextrins.. Functionally, lysozymes have primarily a bacteriolytic function; those in tissues and body fluids are associated with the monocyte-macrophage system and enhance the activity of immunoagents. The protein is Lysozyme C (LYZ) of Papio anubis (Olive baboon).